The sequence spans 119 residues: Large ribosomal subunit protein bL20 (119 aa).

It belongs to the bacterial ribosomal protein bL20 family.

Its function is as follows. Binds directly to 23S ribosomal RNA and is necessary for the in vitro assembly process of the 50S ribosomal subunit. It is not involved in the protein synthesizing functions of that subunit. In Albidiferax ferrireducens (strain ATCC BAA-621 / DSM 15236 / T118) (Rhodoferax ferrireducens), this protein is Large ribosomal subunit protein bL20.